The chain runs to 175 residues: ATP synthase subunit b (175 aa).

Residues Leu20–Trp40 form a helical membrane-spanning segment.

The protein belongs to the ATPase B chain family. F-type ATPases have 2 components, F(1) - the catalytic core - and F(0) - the membrane proton channel. F(1) has five subunits: alpha(3), beta(3), gamma(1), delta(1), epsilon(1). F(0) has four main subunits: a(1), b(2) and c(10-14). The alpha and beta chains form an alternating ring which encloses part of the gamma chain. F(1) is attached to F(0) by a central stalk formed by the gamma and epsilon chains, while a peripheral stalk is formed by the delta and b chains.

The protein resides in the cell inner membrane. In terms of biological role, f(1)F(0) ATP synthase produces ATP from ADP in the presence of a proton or sodium gradient. F-type ATPases consist of two structural domains, F(1) containing the extramembraneous catalytic core and F(0) containing the membrane proton channel, linked together by a central stalk and a peripheral stalk. During catalysis, ATP synthesis in the catalytic domain of F(1) is coupled via a rotary mechanism of the central stalk subunits to proton translocation. Functionally, component of the F(0) channel, it forms part of the peripheral stalk, linking F(1) to F(0). The polypeptide is ATP synthase subunit b (Chlorobium chlorochromatii (strain CaD3)).